A 483-amino-acid chain; its full sequence is MTGNRSLVQRHRKKFVVSSVLFATLFATCAITVYFSKRWLYKQHLKMTEQRFVKEQIKRRFVQTQQDSLYTLYELMPVMTLVLAKDFDLDSIVEALKGKKLQKKLSKGEIAGNELENEGLSSGMSAMTPAPSVSAKSPQSADTTSVSETSTKSKAELWDDLKLKAITKIIILSYTTSLLMLLTRLQLNILARREYLDTAINSAMEKEREKKANQYSVLSWFSSWITEKSNNLPSEKADPRNSDGTIDTDTRSIASTANPEKSRYVNEQAFLSLSWWLLNRGYLQYKSIIEQLVKEEFQNSNPRDIMTMDEFSGKISKIFVTTNKQFFQQPQSNEMFISCLLPEPNLERFVLQQTLEQDALKVLYEDNLLLKQLVQETNKCLQSPGTWIVLESLIDETFHTIMEQIEDNVNSKSKPKSNDDDTKVVDISKNSYQIALFSIATKDCTNEMLKAGLVSMNNKFLQKLHSISALDDLSACVYSNFGL.

The Peroxisomal portion of the chain corresponds to 1-14 (MTGNRSLVQRHRKK). The helical transmembrane segment at 15–35 (FVVSSVLFATLFATCAITVYF) threads the bilayer. The Cytoplasmic segment spans residues 36–483 (SKRWLYKQHL…SACVYSNFGL (448 aa)). Disordered stretches follow at residues 119 to 149 (GLSS…VSET) and 230 to 253 (NNLP…TRSI). Residues 242–253 (SDGTIDTDTRSI) are compositionally biased toward polar residues.

This sequence belongs to the peroxin-3 family.

It is found in the peroxisome membrane. In terms of biological role, involved in peroxisome biosynthesis. This chain is Peroxisomal biogenesis factor 3 (PEX3), found in Kluyveromyces lactis (strain ATCC 8585 / CBS 2359 / DSM 70799 / NBRC 1267 / NRRL Y-1140 / WM37) (Yeast).